Here is a 471-residue protein sequence, read N- to C-terminus: ATP synthase subunit beta (471 aa).

Residue 153–160 (GGAGVGKT) participates in ATP binding.

This sequence belongs to the ATPase alpha/beta chains family. F-type ATPases have 2 components, CF(1) - the catalytic core - and CF(0) - the membrane proton channel. CF(1) has five subunits: alpha(3), beta(3), gamma(1), delta(1), epsilon(1). CF(0) has three main subunits: a(1), b(2) and c(9-12). The alpha and beta chains form an alternating ring which encloses part of the gamma chain. CF(1) is attached to CF(0) by a central stalk formed by the gamma and epsilon chains, while a peripheral stalk is formed by the delta and b chains.

It is found in the cell inner membrane. It carries out the reaction ATP + H2O + 4 H(+)(in) = ADP + phosphate + 5 H(+)(out). Its function is as follows. Produces ATP from ADP in the presence of a proton gradient across the membrane. The catalytic sites are hosted primarily by the beta subunits. The protein is ATP synthase subunit beta of Verminephrobacter eiseniae (strain EF01-2).